A 409-amino-acid polypeptide reads, in one-letter code: Mitochondrial protein import protein MAS5 (409 aa).

Residues 1-172 form a necessary for HAP1 repression in the absence of heme region; that stretch reads MVKETKFYDI…NGQGIKFVTR (172 aa). In terms of domain architecture, J spans 4–72; sequence ETKFYDILGV…RDIYDQFGED (69 aa). Substrate is bound by residues I116 and 135 to 137; that span reads LAL. The CR-type zinc-finger motif lies at 130–213; that stretch reads GRTAKLALNK…CNGKKVENER (84 aa). Residues C143, C146, C159, C162, C185, and C188 each contribute to the Zn(2+) site. CXXCXGXG motif repeat units lie at residues 143–150, 159–166, and 185–192; these read CKECEGRG, CTSCNGQG, and CDVCHGTG. A Glycyl lysine isopeptide (Lys-Gly) (interchain with G-Cter in ubiquitin) cross-link involves residue K198. Positions 201 and 204 each coordinate Zn(2+). Residues 201-208 form a CXXCXGXG motif repeat; the sequence is CKSCNGKK. Residues 215-216 and 247-249 each bind substrate; these read IL and VVF. Positions 382–409 are disordered; it reads RTRASRGGANYDSDEEEQGGEGVQCASQ. C406 carries the post-translational modification Cysteine methyl ester. The S-farnesyl cysteine moiety is linked to residue C406. A propeptide spans 407–409 (removed in mature form); that stretch reads ASQ.

As to quaternary structure, homodimer. Interacts with HAP1. Component of the HMC including HAP1, SRO9 and YDJ1.

It is found in the cytoplasm. Its subcellular location is the perinuclear region. Functionally, probably involved in mitochondrial protein import. Is also required for efficient translocation of pre-pro-alpha-factor. Involved in heme regulation of HAP1, as a component of the high-molecular-weight (HMC) complex. In Saccharomyces cerevisiae (strain ATCC 204508 / S288c) (Baker's yeast), this protein is Mitochondrial protein import protein MAS5 (YDJ1).